The sequence spans 229 residues: Trehalose-6-phosphate phosphatase-related protein (229 aa).

D5 acts as the Nucleophile in catalysis. Mg(2+) contacts are provided by D5, D7, and D177. 5-7 (DYD) contributes to the substrate binding site.

The protein belongs to the trehalose phosphatase family. It depends on Mg(2+) as a cofactor.

The catalysed reaction is alpha,alpha-trehalose 6-phosphate + H2O = alpha,alpha-trehalose + phosphate. The protein operates within glycan biosynthesis; trehalose biosynthesis. Removes the phosphate from trehalose 6-phosphate (Tre6P) to produce free trehalose. Also catalyzes the dephosphorylation of para-nitrophenyl phosphate (pNPP), but with lesser efficiency (in vitro). The chain is Trehalose-6-phosphate phosphatase-related protein from Thermoplasma acidophilum (strain ATCC 25905 / DSM 1728 / JCM 9062 / NBRC 15155 / AMRC-C165).